The following is a 489-amino-acid chain: Zeta-carotene desaturase (489 aa).

It belongs to the zeta carotene desaturase family. NAD(+) serves as cofactor. NADP(+) is required as a cofactor. It depends on FAD as a cofactor.

It carries out the reaction 9,9'-di-cis-zeta-carotene + 2 a quinone = 7,7',9,9'-tetra-cis-lycopene + 2 a quinol. Its pathway is carotenoid biosynthesis; lycopene biosynthesis. Its function is as follows. Catalyzes the conversion of zeta-carotene to lycopene via the intermediary of neurosporene. It carries out two consecutive desaturations (introduction of double bonds) at positions C-7 and C-7'. The sequence is that of Zeta-carotene desaturase (crtQ) from Synechocystis sp. (strain ATCC 27184 / PCC 6803 / Kazusa).